The following is a 175-amino-acid chain: Adenine phosphoribosyltransferase (175 aa).

It belongs to the purine/pyrimidine phosphoribosyltransferase family. Homodimer.

Its subcellular location is the cytoplasm. The catalysed reaction is AMP + diphosphate = 5-phospho-alpha-D-ribose 1-diphosphate + adenine. The protein operates within purine metabolism; AMP biosynthesis via salvage pathway; AMP from adenine: step 1/1. Catalyzes a salvage reaction resulting in the formation of AMP, that is energically less costly than de novo synthesis. This chain is Adenine phosphoribosyltransferase, found in Synechococcus sp. (strain JA-2-3B'a(2-13)) (Cyanobacteria bacterium Yellowstone B-Prime).